A 637-amino-acid polypeptide reads, in one-letter code: Capsid scaffolding protein (637 aa).

Catalysis depends on charge relay system residues histidine 61, serine 129, and histidine 148. 3 disordered regions span residues 262–326, 414–479, and 502–608; these read PERG…PGDG, LPAA…PHET, and HAPY…EAGA. The segment covering 277–317 has biased composition (low complexity); it reads SPAASVPAPQVAVRARQVASSSSSSSFPAPADMNPVSASGA. The interval 326 to 345 is interaction with pAP; that stretch reads GSYLWIPASHYNQLVTGQSA. The short motif at 428-431 is the Nuclear localization signal element; sequence KRRR. Basic and acidic residues-rich tracts occupy residues 432–450 and 457–468; these read HEVE…DRDF and ARPEPRPVDSRR. Composition is skewed to pro residues over residues 537 to 559 and 566 to 594; these read LPPP…PSYP and GPAP…PPAA. Low complexity predominate over residues 595-608; the sequence is SLPQPEAPGAEAGA. Positions 617–637 are interaction with major capsid protein; that stretch reads HVNVDTARAADLFVSQMMGSR.

It belongs to the herpesviridae capsid scaffolding protein family. In terms of assembly, homomultimer. Interacts with major capsid protein. As to quaternary structure, exists in a monomer-dimer equilibrium with the dimer being the active species. Post-translationally, capsid scaffolding protein is cleaved by assemblin after formation of the spherical procapsid. As a result, the capsid obtains its mature, icosahedral shape. Cleavages occur at two or more sites: release (R-site) and maturation (M-site).

It is found in the host cytoplasm. The protein localises to the host nucleus. It catalyses the reaction Cleaves -Ala-|-Ser- and -Ala-|-Ala- bonds in the scaffold protein.. Functionally, acts as a scaffold protein by binding major capsid protein in the cytoplasm, inducing the nuclear localization of both proteins. Multimerizes in the nucleus such as major capsid protein forms the icosahedral T=16 capsid. Autocatalytic cleavage releases the assembly protein, and subsequently abolishes interaction with major capsid protein. Cleavages products are evicted from the capsid before or during DNA packaging. Protease that plays an essential role in virion assembly within the nucleus. Catalyzes the cleavage of the assembly protein after formation of the spherical procapsid. By that cleavage, the capsid matures and gains its icosahedral shape. The cleavage sites seem to include -Ala-Ser-, -Ala-Ala-, as well as Ala-Thr bonds. Assemblin and cleavages products are evicted from the capsid before or during DNA packaging. Its function is as follows. Plays a major role in capsid assembly. Acts as a scaffold protein by binding major capsid protein. Multimerizes in the nucleus such as major capsid protein forms the icosahedral T=16 capsid. Cleaved by assemblin after capsid completion. The cleavages products are evicted from the capsid before or during DNA packaging. This is Capsid scaffolding protein (UL26) from Homo sapiens (Human).